The sequence spans 388 residues: MVVLMLREILKKVAHFSEQKPFLMLLIILIITVFAGISATNVKSQTAFEKMLPQDNPIIKTLYEVRDEFGGTDVITICIKLKPSDSSDKVVDIRDPRVLKAIKELEDNLRYVDGITSVSSPVDIIIQKNNGIVPNDIDTVKDILNKLPEDKRKRIFNSDYSMTVVNAYTDAGGDQKKLMRVMDDVNERIEETPFPPGVEVIATGTPPMRKLMDELMKESQSFTTTVGLIGILIILIIYFRKPLSSIMPLLPVLIAVIWTGGAMGLLDIPLDMATAGIGSLILGLGIDYGIHLMHRYDEERRKGMPIDKAIETAVVETGTAVMATTATTVVGFLALVLAPLPMMANLGKVCALGISFCMVVVLTLLPALIVIEERHIMPLIKRLKGDTQ.

Transmembrane regions (helical) follow at residues 22–42, 219–239, 246–266, 273–293, 320–340, and 351–371; these read FLMLLIILIITVFAGISATNV, SQSFTTTVGLIGILIILIIYF, IMPLLPVLIAVIWTGGAMGLL, ATAGIGSLILGLGIDYGIHLM, AVMATTATTVVGFLALVLAPL, and ALGISFCMVVVLTLLPALIVI.

It belongs to the resistance-nodulation-cell division (RND) (TC 2.A.6) family. MmpL subfamily.

The protein localises to the cell membrane. This Methanocaldococcus jannaschii (strain ATCC 43067 / DSM 2661 / JAL-1 / JCM 10045 / NBRC 100440) (Methanococcus jannaschii) protein is Putative membrane protein MJ1562.